The sequence spans 569 residues: Vacuolar protein sorting-associated protein 45 homolog (569 aa).

The protein belongs to the STXBP/unc-18/SEC1 family. Interacts with both SYP41 or SYP42 and VTI12, but in different domains of the trans-Golgi network. Does not interact on the pervacuolar compartment with VTI11, SYP21 or SYP22, or on the cis-Golgi with SYP31. Interacts at the trans-Golgi network (TGN) with the SYP41/SYP61/VTI12 SNARE complex. As to expression, highly expressed in roots, lower expression in leaves, stems and flowers.

It localises to the golgi apparatus. Its subcellular location is the trans-Golgi network membrane. The protein localises to the early endosome. Involved in the protein transport to the vacuole, probably at the level of vesicle fusion at the trans-Golgi network (TGN) and not in transport from the TGN to the prevacuolar compartment, by promoting the recycling of vacuolar sorting receptors back to the TGN. Involved in early endosomal vesicle trafficking, particularly at the trans-Golgi-network/early endosome (TGN/EE) thus residing in early endocytic route. Together with BIG5/BEN1 required for polar PIN-FORMED (PIN) proteins localization, for their dynamic repolarization, and consequently for auxin activity gradient formation and auxin-related developmental processes (e.g. embryonic patterning, organogenesis and vasculature venation patterning). Necessary for pollen germination and for cell expansion. Binds syntaxins. In Arabidopsis thaliana (Mouse-ear cress), this protein is Vacuolar protein sorting-associated protein 45 homolog.